The chain runs to 159 residues: Type-1 angiotensin II receptor-associated protein (159 aa).

The Extracellular portion of the chain corresponds to 1 to 23; sequence MELPAVNLKVILLGHWLLTTWGC. A helical membrane pass occupies residues 24 to 44; that stretch reads IVFSGSYAWANFTILALGVWA. Over 45–55 the chain is Cytoplasmic; that stretch reads VAQRDSIDAIS. A helical membrane pass occupies residues 56-76; that stretch reads MFLGGLLATIFLDIVHISIFY. At 77-86 the chain is on the extracellular side; that stretch reads PRVSLTDTGR. Residues 87–107 traverse the membrane as a helical segment; the sequence is FGVGMAILSLLLKPLSCCFVY. Topologically, residues 108–159 are cytoplasmic; that stretch reads HMYRERGGELLVHTGFLGSSQDRSAYQTIDSAEAPADPFAVPEGRSQDARGY. The segment at 110–122 is interaction with AGTR1; it reads YRERGGELLVHTG. Residues S126 and S127 each carry the phosphoserine modification. T135 bears the Phosphothreonine mark. A phosphoserine mark is found at S138 and S153. The tract at residues 140 to 159 is disordered; sequence EAPADPFAVPEGRSQDARGY.

Interacts with RACK1, and with the C-terminal region of AGTR1. As to expression, ubiquitous but more abundant in kidney, heart, pancreas and thyroid.

Its subcellular location is the endoplasmic reticulum membrane. It is found in the golgi apparatus membrane. The protein localises to the cytoplasmic vesicle membrane. Its function is as follows. Appears to be a negative regulator of type-1 angiotensin II receptor-mediated signaling by regulating receptor internalization as well as mechanism of receptor desensitization such as phosphorylation. Also induces a decrease in cell proliferation and angiotensin II-stimulated transcriptional activity. In Homo sapiens (Human), this protein is Type-1 angiotensin II receptor-associated protein (AGTRAP).